The chain runs to 308 residues: Glutaminase (308 aa).

7 residues coordinate substrate: Ser-66, Asn-117, Glu-161, Asn-168, Tyr-192, Tyr-244, and Val-262.

It belongs to the glutaminase family. In terms of assembly, homotetramer.

It catalyses the reaction L-glutamine + H2O = L-glutamate + NH4(+). This Salmonella arizonae (strain ATCC BAA-731 / CDC346-86 / RSK2980) protein is Glutaminase.